A 280-amino-acid polypeptide reads, in one-letter code: Urease accessory protein UreD (280 aa).

It belongs to the UreD family. In terms of assembly, ureD, UreF and UreG form a complex that acts as a GTP-hydrolysis-dependent molecular chaperone, activating the urease apoprotein by helping to assemble the nickel containing metallocenter of UreC. The UreE protein probably delivers the nickel.

The protein localises to the cytoplasm. Required for maturation of urease via the functional incorporation of the urease nickel metallocenter. The sequence is that of Urease accessory protein UreD from Pseudomonas aeruginosa (strain UCBPP-PA14).